Reading from the N-terminus, the 352-residue chain is Phosphoribosylformylglycinamidine cyclo-ligase (352 aa).

Belongs to the AIR synthase family.

The protein localises to the cytoplasm. It carries out the reaction 2-formamido-N(1)-(5-O-phospho-beta-D-ribosyl)acetamidine + ATP = 5-amino-1-(5-phospho-beta-D-ribosyl)imidazole + ADP + phosphate + H(+). It participates in purine metabolism; IMP biosynthesis via de novo pathway; 5-amino-1-(5-phospho-D-ribosyl)imidazole from N(2)-formyl-N(1)-(5-phospho-D-ribosyl)glycinamide: step 2/2. The protein is Phosphoribosylformylglycinamidine cyclo-ligase of Nitrosospira multiformis (strain ATCC 25196 / NCIMB 11849 / C 71).